Reading from the N-terminus, the 484-residue chain is Glutamate--tRNA ligase (484 aa).

The 'HIGH' region motif lies at 11 to 21; it reads PSPTGYLHIGN. The 'KMSKS' region signature appears at 252-256; sequence KLSKR. An ATP-binding site is contributed by Lys-255.

It belongs to the class-I aminoacyl-tRNA synthetase family. Glutamate--tRNA ligase type 1 subfamily. As to quaternary structure, monomer.

It is found in the cytoplasm. The catalysed reaction is tRNA(Glu) + L-glutamate + ATP = L-glutamyl-tRNA(Glu) + AMP + diphosphate. Functionally, catalyzes the attachment of glutamate to tRNA(Glu) in a two-step reaction: glutamate is first activated by ATP to form Glu-AMP and then transferred to the acceptor end of tRNA(Glu). The polypeptide is Glutamate--tRNA ligase (Staphylococcus haemolyticus (strain JCSC1435)).